The primary structure comprises 264 residues: Thymidylate synthase (264 aa).

A dUMP-binding site is contributed by Arg-21. His-51 serves as a coordination point for (6R)-5,10-methylene-5,6,7,8-tetrahydrofolate. Arg-126–Arg-127 is a binding site for dUMP. The active-site Nucleophile is Cys-146. DUMP-binding positions include Arg-166–Asp-169, Asn-177, and His-207–Tyr-209. Asp-169 contributes to the (6R)-5,10-methylene-5,6,7,8-tetrahydrofolate binding site. (6R)-5,10-methylene-5,6,7,8-tetrahydrofolate is bound at residue Ala-263.

The protein belongs to the thymidylate synthase family. Bacterial-type ThyA subfamily. In terms of assembly, homodimer.

Its subcellular location is the cytoplasm. The enzyme catalyses dUMP + (6R)-5,10-methylene-5,6,7,8-tetrahydrofolate = 7,8-dihydrofolate + dTMP. It functions in the pathway pyrimidine metabolism; dTTP biosynthesis. Its function is as follows. Catalyzes the reductive methylation of 2'-deoxyuridine-5'-monophosphate (dUMP) to 2'-deoxythymidine-5'-monophosphate (dTMP) while utilizing 5,10-methylenetetrahydrofolate (mTHF) as the methyl donor and reductant in the reaction, yielding dihydrofolate (DHF) as a by-product. This enzymatic reaction provides an intracellular de novo source of dTMP, an essential precursor for DNA biosynthesis. The polypeptide is Thymidylate synthase (Shewanella baltica (strain OS185)).